We begin with the raw amino-acid sequence, 372 residues long: NADH-quinone oxidoreductase subunit D (372 aa).

The protein belongs to the complex I 49 kDa subunit family. As to quaternary structure, NDH-1 is composed of 14 different subunits. Subunits NuoB, C, D, E, F, and G constitute the peripheral sector of the complex.

It localises to the cell inner membrane. The enzyme catalyses a quinone + NADH + 5 H(+)(in) = a quinol + NAD(+) + 4 H(+)(out). Functionally, NDH-1 shuttles electrons from NADH, via FMN and iron-sulfur (Fe-S) centers, to quinones in the respiratory chain. The immediate electron acceptor for the enzyme in this species is believed to be ubiquinone. Couples the redox reaction to proton translocation (for every two electrons transferred, four hydrogen ions are translocated across the cytoplasmic membrane), and thus conserves the redox energy in a proton gradient. This is NADH-quinone oxidoreductase subunit D from Desulfotalea psychrophila (strain LSv54 / DSM 12343).